Consider the following 195-residue polypeptide: dTTP/UTP pyrophosphatase (195 aa).

Asp73 serves as the catalytic Proton acceptor.

Belongs to the Maf family. YhdE subfamily. It depends on a divalent metal cation as a cofactor.

The protein localises to the cytoplasm. It carries out the reaction dTTP + H2O = dTMP + diphosphate + H(+). The catalysed reaction is UTP + H2O = UMP + diphosphate + H(+). In terms of biological role, nucleoside triphosphate pyrophosphatase that hydrolyzes dTTP and UTP. May have a dual role in cell division arrest and in preventing the incorporation of modified nucleotides into cellular nucleic acids. The polypeptide is dTTP/UTP pyrophosphatase (Deinococcus radiodurans (strain ATCC 13939 / DSM 20539 / JCM 16871 / CCUG 27074 / LMG 4051 / NBRC 15346 / NCIMB 9279 / VKM B-1422 / R1)).